The sequence spans 141 residues: Large-conductance mechanosensitive channel (141 aa).

The next 2 membrane-spanning stretches (helical) occupy residues 16 to 36 and 83 to 103; these read VVDLAVGVIIGGAFGKIVSSM and GNFIQTVIDFTILAFVIFLMV.

This sequence belongs to the MscL family. In terms of assembly, homopentamer.

Its subcellular location is the cell inner membrane. In terms of biological role, channel that opens in response to stretch forces in the membrane lipid bilayer. May participate in the regulation of osmotic pressure changes within the cell. This Cytophaga hutchinsonii (strain ATCC 33406 / DSM 1761 / CIP 103989 / NBRC 15051 / NCIMB 9469 / D465) protein is Large-conductance mechanosensitive channel.